Reading from the N-terminus, the 230-residue chain is Fibrillarin-like rRNA/tRNA 2'-O-methyltransferase (230 aa).

Residues 87–88, 105–106, 130–131, and 150–153 each bind S-adenosyl-L-methionine; these read TT, EY, DA, and DVAQ.

As to quaternary structure, interacts with nop5. Component of box C/D small ribonucleoprotein (sRNP) particles that contain rpl7ae, FlpA and nop5, plus a guide RNA.

Involved in pre-rRNA and tRNA processing. Utilizes the methyl donor S-adenosyl-L-methionine to catalyze the site-specific 2'-hydroxyl methylation of ribose moieties in rRNA and tRNA. Site specificity is provided by a guide RNA that base pairs with the substrate. Methylation occurs at a characteristic distance from the sequence involved in base pairing with the guide RNA. The sequence is that of Fibrillarin-like rRNA/tRNA 2'-O-methyltransferase from Methanocaldococcus jannaschii (strain ATCC 43067 / DSM 2661 / JAL-1 / JCM 10045 / NBRC 100440) (Methanococcus jannaschii).